Reading from the N-terminus, the 325-residue chain is uncharacterized protein (325 aa).

The segment at 296–325 is disordered; that stretch reads QRTLSSSMEEADRPRRMSVTQPHLPPVPSA.

It belongs to the NDRG family.

This is an uncharacterized protein from Caenorhabditis elegans.